A 183-amino-acid polypeptide reads, in one-letter code: Glutamyl-tRNA(Gln) amidotransferase subunit F, mitochondrial (183 aa).

Residues 1–23 constitute a mitochondrion transit peptide; that stretch reads MSRMLNQIPRLITRSFRTSSVGY.

This sequence belongs to the GatF family. Subunit of the heterotrimeric GatFAB amidotransferase (AdT) complex, composed of A, B and F subunits.

It is found in the mitochondrion inner membrane. It carries out the reaction L-glutamyl-tRNA(Gln) + L-glutamine + ATP + H2O = L-glutaminyl-tRNA(Gln) + L-glutamate + ADP + phosphate + H(+). Functionally, allows the formation of correctly charged Gln-tRNA(Gln) through the transamidation of misacylated Glu-tRNA(Gln) in the mitochondria. The reaction takes place in the presence of glutamine and ATP through an activated gamma-phospho-Glu-tRNA(Gln). Required for proper protein synthesis within the mitochondrion. The protein is Glutamyl-tRNA(Gln) amidotransferase subunit F, mitochondrial of Debaryomyces hansenii (strain ATCC 36239 / CBS 767 / BCRC 21394 / JCM 1990 / NBRC 0083 / IGC 2968) (Yeast).